The following is a 562-amino-acid chain: BOS complex subunit NCLN (562 aa).

The first 41 residues, 1–41 (MLEEAGEVLESVLKASCLPLSFLLFVPAVLLLLGPPPAAEA), serve as a signal peptide directing secretion. Residues 42-521 (AHESTVYRMQ…VMNAYRVKPA (480 aa)) lie on the Extracellular side of the membrane. Residue asparagine 240 is glycosylated (N-linked (GlcNAc...) asparagine). The tract at residues 420-447 (GFDEGHLQPNREGSTCRSADLHGSDADP) is disordered. A helical transmembrane segment spans residues 522–542 (IFDLLLAVCIAAYLGVAYVAV). Over 543–562 (QNFGLLYRMIQRLSLKTKQQ) the chain is Cytoplasmic.

It belongs to the nicastrin family. In terms of assembly, component of the multi-pass translocon (MPT) complex.

It is found in the endoplasmic reticulum membrane. In terms of biological role, component of the multi-pass translocon (MPT) complex that mediates insertion of multi-pass membrane proteins into the lipid bilayer of membranes. The MPT complex takes over after the SEC61 complex: following membrane insertion of the first few transmembrane segments of proteins by the SEC61 complex, the MPT complex occludes the lateral gate of the SEC61 complex to promote insertion of subsequent transmembrane regions. May antagonize Nodal signaling and subsequent organization of axial structures during mesodermal patterning, via its interaction with NOMO. The sequence is that of BOS complex subunit NCLN (NCLN) from Gallus gallus (Chicken).